A 325-amino-acid chain; its full sequence is Aldo-keto reductase family 1 member A1 (325 aa).

Alanine 2 is subject to N-acetylalanine. Serine 4 bears the Phosphoserine mark. NADP(+) is bound by residues 11-20 (GQKMPLIGLG), threonine 21, and tryptophan 22. Serine 38 bears the Phosphoserine mark. Aspartate 45 is an NADP(+) binding site. Tyrosine 50 (proton donor) is an active-site residue. Residue lysine 127 is modified to N6-acetyllysine; alternate. An N6-succinyllysine; alternate modification is found at lysine 127. 12 residues coordinate NADP(+): serine 162, asparagine 163, serine 211, leucine 213, serine 215, serine 216, lysine 263, serine 264, valine 265, threonine 266, arginine 269, and asparagine 273. Serine 211 carries the phosphoserine modification.

Belongs to the aldo/keto reductase family. Monomer.

The protein localises to the cytoplasm. The protein resides in the cytosol. Its subcellular location is the apical cell membrane. It carries out the reaction a primary alcohol + NADP(+) = an aldehyde + NADPH + H(+). It catalyses the reaction L-gulonate + NADP(+) = aldehydo-D-glucuronate + NADPH + H(+). The catalysed reaction is L-gulono-1,4-lactone + NADP(+) = D-glucurono-3,6-lactone + NADPH + H(+). The enzyme catalyses allyl alcohol + NADP(+) = acrolein + NADPH + H(+). It carries out the reaction glycerol + NADP(+) = D-glyceraldehyde + NADPH + H(+). It catalyses the reaction glycerol + NADP(+) = L-glyceraldehyde + NADPH + H(+). The catalysed reaction is hydroxyacetone + NADP(+) = methylglyoxal + NADPH + H(+). The enzyme catalyses 3-deoxyfructose + NADP(+) = 3-deoxyglucosone + NADPH + H(+). It carries out the reaction (R)-mevalonate + NADP(+) = (R)-mevaldate + NADPH + H(+). It catalyses the reaction pyridine 3-methanol + NADP(+) = pyridine-3-carbaldehyde + NADPH + H(+). The catalysed reaction is S-nitroso-CoA + NADPH + H(+) = sulfinamide-CoA + NADP(+). The enzyme catalyses S-nitrosoglutathione + NADPH + H(+) = S-(hydroxysulfenamide)glutathione + NADP(+). Functionally, catalyzes the NADPH-dependent reduction of a wide variety of carbonyl-containing compounds to their corresponding alcohols. Displays enzymatic activity towards endogenous metabolites such as aromatic and aliphatic aldehydes, ketones, monosaccharides and bile acids, with a preference for negatively charged substrates, such as glucuronate and succinic semialdehyde. Plays an important role in ascorbic acid biosynthesis by catalyzing the reduction of D-glucuronic acid and D-glucurono-gamma-lactone. Functions as a detoxifiying enzyme by reducing a range of toxic aldehydes. Reduces methylglyoxal and 3-deoxyglucosone, which are present at elevated levels under hyperglycemic conditions and are cytotoxic. Involved also in the detoxification of lipid-derived aldehydes like acrolein. Plays a role in the activation of procarcinogens, such as polycyclic aromatic hydrocarbon trans-dihydrodiols, and in the metabolism of various xenobiotics and drugs. Also acts as an inhibitor of protein S-nitrosylation by mediating degradation of S-nitroso-coenzyme A (S-nitroso-CoA), a cofactor required to S-nitrosylate proteins. S-nitroso-CoA reductase activity is involved in reprogramming intermediary metabolism in renal proximal tubules, notably by inhibiting protein S-nitrosylation of isoform 2 of PKM (PKM2). Also acts as a S-nitroso-glutathione reductase by catalyzing the NADPH-dependent reduction of S-nitrosoglutathione. Displays no reductase activity towards retinoids. The sequence is that of Aldo-keto reductase family 1 member A1 from Bos taurus (Bovine).